The chain runs to 89 residues: Small ribosomal subunit protein uS14 (89 aa).

This sequence belongs to the universal ribosomal protein uS14 family. In terms of assembly, part of the 30S ribosomal subunit. Contacts proteins S3 and S10.

Its function is as follows. Binds 16S rRNA, required for the assembly of 30S particles and may also be responsible for determining the conformation of the 16S rRNA at the A site. This chain is Small ribosomal subunit protein uS14, found in Porphyromonas gingivalis (strain ATCC 33277 / DSM 20709 / CIP 103683 / JCM 12257 / NCTC 11834 / 2561).